Reading from the N-terminus, the 625-residue chain is Glutamyl-tRNA(Gln) amidotransferase subunit E (625 aa).

The protein belongs to the GatB/GatE family. GatE subfamily. In terms of assembly, heterodimer of GatD and GatE.

It carries out the reaction L-glutamyl-tRNA(Gln) + L-glutamine + ATP + H2O = L-glutaminyl-tRNA(Gln) + L-glutamate + ADP + phosphate + H(+). Its function is as follows. Allows the formation of correctly charged Gln-tRNA(Gln) through the transamidation of misacylated Glu-tRNA(Gln) in organisms which lack glutaminyl-tRNA synthetase. The reaction takes place in the presence of glutamine and ATP through an activated gamma-phospho-Glu-tRNA(Gln). The GatDE system is specific for glutamate and does not act on aspartate. The polypeptide is Glutamyl-tRNA(Gln) amidotransferase subunit E (Caldivirga maquilingensis (strain ATCC 700844 / DSM 13496 / JCM 10307 / IC-167)).